The primary structure comprises 428 residues: Kynureninase (428 aa).

Pyridoxal 5'-phosphate contacts are provided by residues Thr-104, Thr-105, 132-135 (FPSD), Asp-213, His-216, and Tyr-238. N6-(pyridoxal phosphate)lysine is present on Lys-239. The pyridoxal 5'-phosphate site is built by Trp-267 and Thr-295.

It belongs to the kynureninase family. In terms of assembly, homodimer. Pyridoxal 5'-phosphate is required as a cofactor.

It carries out the reaction L-kynurenine + H2O = anthranilate + L-alanine + H(+). The catalysed reaction is 3-hydroxy-L-kynurenine + H2O = 3-hydroxyanthranilate + L-alanine + H(+). The protein operates within amino-acid degradation; L-kynurenine degradation; L-alanine and anthranilate from L-kynurenine: step 1/1. It participates in cofactor biosynthesis; NAD(+) biosynthesis; quinolinate from L-kynurenine: step 2/3. Its function is as follows. Catalyzes the cleavage of L-kynurenine (L-Kyn) and L-3-hydroxykynurenine (L-3OHKyn) into anthranilic acid (AA) and 3-hydroxyanthranilic acid (3-OHAA), respectively. In Bacillus cereus (strain ATCC 10987 / NRS 248), this protein is Kynureninase.